Consider the following 117-residue polypeptide: Large ribosomal subunit protein uL18 (117 aa).

It belongs to the universal ribosomal protein uL18 family. Part of the 50S ribosomal subunit; part of the 5S rRNA/L5/L18/L25 subcomplex. Contacts the 5S and 23S rRNAs.

Its function is as follows. This is one of the proteins that bind and probably mediate the attachment of the 5S RNA into the large ribosomal subunit, where it forms part of the central protuberance. The sequence is that of Large ribosomal subunit protein uL18 from Francisella philomiragia subsp. philomiragia (strain ATCC 25017 / CCUG 19701 / FSC 153 / O#319-036).